The sequence spans 239 residues: Phosphoadenosine 5'-phosphosulfate reductase (239 aa).

Residue C235 is the Nucleophile; cysteine thiosulfonate intermediate of the active site.

Belongs to the PAPS reductase family. CysH subfamily.

The protein localises to the cytoplasm. The enzyme catalyses [thioredoxin]-disulfide + sulfite + adenosine 3',5'-bisphosphate + 2 H(+) = [thioredoxin]-dithiol + 3'-phosphoadenylyl sulfate. It functions in the pathway sulfur metabolism; hydrogen sulfide biosynthesis; sulfite from sulfate: step 3/3. Catalyzes the formation of sulfite from phosphoadenosine 5'-phosphosulfate (PAPS) using thioredoxin as an electron donor. In Thiocapsa roseopersicina, this protein is Phosphoadenosine 5'-phosphosulfate reductase.